The following is a 110-amino-acid chain: DNA-binding protein Mlab_1482 (110 aa).

The protein belongs to the PDCD5 family.

The sequence is that of DNA-binding protein Mlab_1482 from Methanocorpusculum labreanum (strain ATCC 43576 / DSM 4855 / Z).